The chain runs to 219 residues: Octanoyltransferase (219 aa).

A BPL/LPL catalytic domain is found at 32–207 (ENSQDEIWIV…TLSQELGLDK (176 aa)). Residues 71 to 78 (RGGQVTYH), 138 to 140 (SLG), and 151 to 153 (GLA) contribute to the substrate site. Catalysis depends on Cys169, which acts as the Acyl-thioester intermediate.

Belongs to the LipB family.

The protein localises to the cytoplasm. It carries out the reaction octanoyl-[ACP] + L-lysyl-[protein] = N(6)-octanoyl-L-lysyl-[protein] + holo-[ACP] + H(+). Its pathway is protein modification; protein lipoylation via endogenous pathway; protein N(6)-(lipoyl)lysine from octanoyl-[acyl-carrier-protein]: step 1/2. Catalyzes the transfer of endogenously produced octanoic acid from octanoyl-acyl-carrier-protein onto the lipoyl domains of lipoate-dependent enzymes. Lipoyl-ACP can also act as a substrate although octanoyl-ACP is likely to be the physiological substrate. The protein is Octanoyltransferase of Shewanella pealeana (strain ATCC 700345 / ANG-SQ1).